A 457-amino-acid chain; its full sequence is Tubulin gamma-2 chain (457 aa).

Residue Ala142–Gly148 coordinates GTP.

The protein belongs to the tubulin family. In terms of assembly, interacts with Ote. As to expression, expressed in nurse cells and oocytes of developing egg chambers.

It localises to the cytoplasm. The protein resides in the cytoskeleton. The protein localises to the microtubule organizing center. Its subcellular location is the centrosome. It is found in the spindle. Functionally, tubulin is the major constituent of microtubules. The gamma chain is found at microtubule organizing centers (MTOC) such as the spindle poles or the centrosome, suggesting that it is involved in the minus-end nucleation of microtubule assembly. Required for oocyte activation and consequently for organization of the female meiotic spindle. Essential for centrosome organization and assembly of biastral mitotic spindles in embryos. Plays a role in stabilizing the augmin complex on the meiotic spindle. This Drosophila melanogaster (Fruit fly) protein is Tubulin gamma-2 chain (gammaTub37C).